The chain runs to 432 residues: MKFTLVATVLLTFSLSAFAVEYPVLTTASPDQVGFDSQKLHRLDGWIQNQIDAGYPSINLLVIKDNHIVLQKAWGYAKKYDGSTLLAHPIRATTNTMYDLASNTKMYATNFALQKLVYEGKIDVNDLVSKYIPGFKDMPGDKIKGKDKLRIIDILHHVAGFPADPQYPNKNVAGKLFSQSKSTTLEMIKKTPLEYQPGSKHIYSDVDYMILGFIIESITAMPLDRYVETTIYKPLGLKHTVFNPLMKGFTPPQIAATELHGNTRDGVIHFPNIRTNTLWGQVHDEKAWYSMGGVSGHAGLFSDTHDMAVLMQVMLNGGGYGNVKLFDNKTVAQFTRRSPEDATFGLGWRVNGNASMTPTFGVLASPQTYGHTGWTGTLTSIDPVNHMAIVILGNRPHSPVANPKVNPNVFVSGLLPAATYGWIVDQIYGSLK.

A helical; Signal-anchor transmembrane segment spans residues 7 to 25 (ATVLLTFSLSAFAVEYPVL).

Belongs to the peptidase S12 family. YfeW subfamily.

It is found in the cell inner membrane. It carries out the reaction Preferential cleavage: (Ac)2-L-Lys-D-Ala-|-D-Ala. Also transpeptidation of peptidyl-alanyl moieties that are N-acyl substituents of D-alanine.. In Salmonella typhi, this protein is Putative D-alanyl-D-alanine carboxypeptidase.